A 669-amino-acid polypeptide reads, in one-letter code: Alpha-1,4-glucan:maltose-1-phosphate maltosyltransferase 2 (669 aa).

3 residues coordinate alpha-maltose 1-phosphate: K255, Q315, and D350. D385 serves as the catalytic Nucleophile. N386 is a binding site for alpha-maltose 1-phosphate. The Proton donor role is filled by E414. Residue 525–526 (KY) coordinates alpha-maltose 1-phosphate.

The protein belongs to the glycosyl hydrolase 13 family. GlgE subfamily. Homodimer.

The enzyme catalyses alpha-maltose 1-phosphate + [(1-&gt;4)-alpha-D-glucosyl](n) = [(1-&gt;4)-alpha-D-glucosyl](n+2) + phosphate. Functionally, maltosyltransferase that uses maltose 1-phosphate (M1P) as the sugar donor to elongate linear or branched alpha-(1-&gt;4)-glucans. Maltooligosaccharides with a degree of polymerization (DP) superior or equal to 4 are efficient acceptors, with DP6 being optimal in the GlgE-catalyzed polymerization with M1P. Is probably involved in a branched alpha-glucan biosynthetic pathway from trehalose, together with TreS, Mak and GlgB. The protein is Alpha-1,4-glucan:maltose-1-phosphate maltosyltransferase 2 (glgE2) of Streptomyces coelicolor (strain ATCC BAA-471 / A3(2) / M145).